Consider the following 555-residue polypeptide: Transcriptional adapter 2b (555 aa).

A ZZ-type zinc finger spans residues 8–63 (FTKYNCTNCQDDIQGIRVHCAECENFDLCLQCFAAGAEIGAHQNNHSYQFMDTGTS). 8 residues coordinate Zn(2+): C13, C16, C27, C30, C36, C39, H49, and H53. Residues 69 to 121 (RGKGAWTAREEIRLLDAIEQYGFGNWEDISKHIETKSAEDAKEEYVNKFVNGT) form the SANT domain. The tract at residues 318–372 (THRSTGPYGHGKTDHTHTSNGSHRPPSSSLHSPQPNLRKVEMSSGGEASSNSIAP) is disordered. The span at 339-352 (SHRPPSSSLHSPQP) shows a compositional bias: low complexity. A compositionally biased stretch (polar residues) spans 363–372 (GEASSNSIAP).

In terms of assembly, component of histone acetyltransferase complexes containing Gcn5 and Ada3. Can heterooligomerize with Isoform A. Component of the Spt-Ada-Gcn5 acetyltransferase (SAGA) complex consisting of Ada1, Ada2b (Isoform B), Ada3, wda, Saf6, Spt3, Spt7, Spt20, Taf9, Taf10b, Taf12, Nipped-A/Tra1, Sf3b3, Sf3b5, not/nonstop, Sgf11, Sgf29, e(y)2, Atxn7 and Gcn5. Taf5 and Taf10, which has partially redundant properties with Taf10b, may also be part of this complex. Interacts (via C-terminus) with Spt3 and Taf12; the interactions are direct. Interacts with Ada3; the interaction is probably direct. May also interact directly with Spt7 and Gcn5. Interacts with p53. As to quaternary structure, can heterooligomerize with Isoform B. Component of the Chiffon histone acetyltransferase (CHAT) complex consisting of Ada3, Sgf29, Gcn5, chif/chiffon and Ada2b (Isoform A). Interacts (via N-terminus) with Gcn5 and Ada3; the interaction is direct. Can interact directly with Spt7 in vitro but in vivo this interaction is not stable probably due to the absence of other SAGA components. Interacts with p53. As to expression, expressed in nurse cells of stage 10 egg chambers and transcripts are dumped into the oocyte when nurse cells degenerate at late oogenesis.

The protein localises to the nucleus. Functionally, component of several Gcn5-containing histone acetyltransferase complexes that regulate nucleosome organization; involved in acetylation of histone H3, particularly on Lys-10 (H3K9ac) and Lys-15 (H3K14ac). Regulates the transcription of a subset of genes during development; affects recruitment of RNA polymerase II. May be involved in the function of some acidic activation domains, which activate transcription at distant sites. Involved in the p53-dependent apoptosis pathway response to DNA damage by genotoxic agents. In terms of biological role, component of the SAGA histone acetyltransferase complex, which predominantly acetylates histone H3. Its function is as follows. Component of the CHAT histone acetyltransferase complex, which predominantly acetylates histone H3. This chain is Transcriptional adapter 2b, found in Drosophila melanogaster (Fruit fly).